Consider the following 474-residue polypeptide: Selection and upkeep of intraepithelial T-cells protein 4 (474 aa).

Residues 1-25 form the signal peptide; it reads MGATEVLTSYCVVLCLLQMVALSSG. At 26 to 241 the chain is on the extracellular side; that stretch reads HFTVIGSQRP…VLSGELFSWK (216 aa). In terms of domain architecture, Ig-like V-type spans 27–140; the sequence is FTVIGSQRPI…EEHITEVKVT (114 aa). Cystine bridges form between Cys48/Cys122 and Cys162/Cys216. Asn111 and Asn199 each carry an N-linked (GlcNAc...) asparagine glycan. The 94-residue stretch at 141-234 folds into the Ig-like C1-type domain; sequence ATSSDIQILM…QEQSINIVLS (94 aa). Residues 242-262 form a helical membrane-spanning segment; it reads IVWIMILSTISFVMIDFCMTY. At 263 to 298 the chain is on the cytoplasmic side; that stretch reads CVQQQLIHEESLSTVDNDQCESDQSEGTCYKRNYPW. Residues 299–319 form a helical membrane-spanning segment; sequence IIIAVVPIISVFAIIGVMLFL. Topologically, residues 320–341 are extracellular; the sequence is HLEQRVTILEQHFELDTLWLED. The chain crosses the membrane as a helical span at residues 342 to 362; that stretch reads ISVILCVVIVSNINLIPLIYF. At 363-381 the chain is on the cytoplasmic side; the sequence is RLHEHVPRFKDRSPILNKA. A helical membrane pass occupies residues 382–402; sequence VVFLHFIYFSIVCGTILLVHL. Over 403–420 the chain is Extracellular; the sequence is QLRNKVSISDSLFSLYNS. A helical membrane pass occupies residues 421–441; sequence WLTDISMILGFLLSIFIVTTI. The Cytoplasmic segment spans residues 442–474; it reads AKSSLFNKKWCIGLCIHMKEAEATGGPCEGEEL.

This sequence belongs to the SKINT family. In terms of tissue distribution, expressed in skin, thymus and, to a lower extent, bladder and testis.

It localises to the membrane. May act by engaging a cell surface molecule on immature T-cells in the embryonic thymus. The sequence is that of Selection and upkeep of intraepithelial T-cells protein 4 (Skint4) from Mus musculus (Mouse).